A 106-amino-acid chain; its full sequence is Small ribosomal subunit protein bS18 (106 aa).

Positions Met1 to Arg39 are disordered.

The protein belongs to the bacterial ribosomal protein bS18 family. In terms of assembly, part of the 30S ribosomal subunit. Forms a tight heterodimer with protein bS6.

Functionally, binds as a heterodimer with protein bS6 to the central domain of the 16S rRNA, where it helps stabilize the platform of the 30S subunit. The polypeptide is Small ribosomal subunit protein bS18 (Sorangium cellulosum (strain So ce56) (Polyangium cellulosum (strain So ce56))).